The chain runs to 307 residues: Methionyl-tRNA formyltransferase (307 aa).

Ser-108–Pro-111 serves as a coordination point for (6S)-5,6,7,8-tetrahydrofolate.

Belongs to the Fmt family.

It carries out the reaction L-methionyl-tRNA(fMet) + (6R)-10-formyltetrahydrofolate = N-formyl-L-methionyl-tRNA(fMet) + (6S)-5,6,7,8-tetrahydrofolate + H(+). Attaches a formyl group to the free amino group of methionyl-tRNA(fMet). The formyl group appears to play a dual role in the initiator identity of N-formylmethionyl-tRNA by promoting its recognition by IF2 and preventing the misappropriation of this tRNA by the elongation apparatus. In Xanthomonas campestris pv. campestris (strain 8004), this protein is Methionyl-tRNA formyltransferase.